A 98-amino-acid polypeptide reads, in one-letter code: Large ribosomal subunit protein uL23 (98 aa).

The protein belongs to the universal ribosomal protein uL23 family. In terms of assembly, part of the 50S ribosomal subunit. Contacts protein L29, and trigger factor when it is bound to the ribosome.

One of the early assembly proteins it binds 23S rRNA. One of the proteins that surrounds the polypeptide exit tunnel on the outside of the ribosome. Forms the main docking site for trigger factor binding to the ribosome. This chain is Large ribosomal subunit protein uL23, found in Streptococcus pyogenes serotype M1.